A 141-amino-acid polypeptide reads, in one-letter code: Oleosin L (141 aa).

Helical transmembrane passes span 23-43 (VLFF…LALA), 46-66 (VVLM…ILPV), and 74-94 (AAAF…LIWV). A Proline-knot motif is present at residues 54-65 (PVFLLLSPVILP).

Belongs to the oleosin family. In terms of tissue distribution, expressed in megagametophytes (at protein level).

The protein resides in the lipid droplet. The protein localises to the membrane. The sequence is that of Oleosin L from Pinus massoniana (Chinese red pine).